A 449-amino-acid chain; its full sequence is uncharacterized protein (449 aa).

2 disordered regions span residues 1–58 (MVKR…SLSS) and 71–125 (EALE…VVEL). Residues 30–46 (KQRDELREKQKRKREDS) show a composition bias toward basic and acidic residues. Positions 103-124 (SDDDDDDNEEEDDNGFEDQVVE) are enriched in acidic residues.

It belongs to the bystin family.

This is an uncharacterized protein from Caenorhabditis elegans.